Here is a 146-residue protein sequence, read N- to C-terminus: Interleukin-13 (146 aa).

Residues 1–24 (MHPLLNPLLLALGLMALLLTTVIA) form the signal peptide. Residues Asn-52, Asn-63, Asn-71, and Asn-86 are each glycosylated (N-linked (GlcNAc...) asparagine). 2 disulfides stabilise this stretch: Cys-62/Cys-90 and Cys-78/Cys-104.

The protein belongs to the IL-4/IL-13 family. As to quaternary structure, interacts with IL13RA2.

The protein resides in the secreted. Its function is as follows. Cytokine that plays important roles in allergic inflammation and immune response to parasite infection. Synergizes with IL2 in regulating interferon-gamma synthesis. Stimulates B-cell proliferation, and activation of eosinophils, basophils, and mast cells. Plays an important role in controlling IL33 activity by modulating the production of transmembrane and soluble forms of interleukin-1 receptor-like 1/IL1RL1. Displays the capacity to antagonize Th1-driven proinflammatory immune response and downregulates synthesis of many proinflammatory cytokines including IL1, IL6, IL10, IL12 and TNF-alpha through a mechanism that partially involves suppression of NF-kappa-B. Also functions on nonhematopoietic cells, including endothelial cells where it induces vascular cell adhesion protein 1/VCAM1, which is important in the recruitment of eosinophils. Exerts its biological effects through its receptors which comprises the IL4R chain and the IL13RA1 chain, to activate JAK1 and TYK2, leading to the activation of STAT6. Aside from IL13RA1, another receptor IL13RA2 acts as a high affinity decoy for IL13 and mediates internalization and depletion of extracellular IL13. This is Interleukin-13 (IL13) from Homo sapiens (Human).